An 81-amino-acid polypeptide reads, in one-letter code: Large ribosomal subunit protein bL27 (81 aa).

Over residues 1-11 (MATSKSGGSSK) the composition is skewed to polar residues. Positions 1–24 (MATSKSGGSSKNGRDSISKRLGVK) are disordered.

Belongs to the bacterial ribosomal protein bL27 family.

This is Large ribosomal subunit protein bL27 from Borrelia duttonii (strain Ly).